The chain runs to 516 residues: Nucleolar complex protein 4 homolog (516 aa).

Helical transmembrane passes span 296–316 (SACDVGGAISLLALNGLFILI), 347–367 (FFHLADLFLSSSHLPAYLVAA), and 375–395 (LALTAPPEALLMVLPLICNLL).

It belongs to the CBF/MAK21 family.

The protein resides in the nucleus membrane. The protein localises to the nucleus. It is found in the nucleolus. This Rattus norvegicus (Rat) protein is Nucleolar complex protein 4 homolog (Noc4l).